A 259-amino-acid chain; its full sequence is NH(3)-dependent NAD(+) synthetase (259 aa).

An ATP-binding site is contributed by 33-40; it reads GLSGGIDS. Asp-39 contributes to the Mg(2+) binding site. Residue Arg-119 coordinates deamido-NAD(+). Thr-139 is an ATP binding site. Glu-144 contributes to the Mg(2+) binding site. Deamido-NAD(+) is bound by residues Lys-152 and Asp-159. Lys-168 and Ser-190 together coordinate ATP. Position 249–250 (249–250) interacts with deamido-NAD(+); sequence HK.

Belongs to the NAD synthetase family. As to quaternary structure, homodimer.

The enzyme catalyses deamido-NAD(+) + NH4(+) + ATP = AMP + diphosphate + NAD(+) + H(+). Its pathway is cofactor biosynthesis; NAD(+) biosynthesis; NAD(+) from deamido-NAD(+) (ammonia route): step 1/1. In terms of biological role, catalyzes the ATP-dependent amidation of deamido-NAD to form NAD. Uses ammonia as a nitrogen source. This is NH(3)-dependent NAD(+) synthetase from Methanocaldococcus jannaschii (strain ATCC 43067 / DSM 2661 / JAL-1 / JCM 10045 / NBRC 100440) (Methanococcus jannaschii).